Here is a 634-residue protein sequence, read N- to C-terminus: Ankyrin repeat and SOCS box protein 2 (634 aa).

Positions 26–45 (SEEELLQMAIEQSLADKTRG) constitute a UIM domain. The interval 36-82 (EQSLADKTRGPTPAEASASSQTNHQPGHFHPWTRSPSSPENPPARAP) is disordered. ANK repeat units follow at residues 104–133 (AAMD…NLAE), 137–167 (EGWL…TIDQ), 171–200 (QEET…EPDI), 204–233 (SRET…DANH), 237–266 (RGWT…KVEA), 270–299 (YSIT…DINT), 303–332 (DSAS…DANK), 336–365 (DGLL…RTRV), 368–397 (SGIS…DVNA), 410–439 (RRSS…DPNR), 440–469 (DVIS…NIDA), and 476–504 (TAFP…DGEP). A Phosphoserine modification is found at serine 371. The SOCS box domain occupies 580 to 634 (EDWAVIKEKAEPPRPLAHLCRLRVRKAIGKYRIKLLDTLPLPGRLIRYLKYENTQ).

Belongs to the ankyrin SOCS box (ASB) family. In terms of assembly, component of a probable ECS E3 ubiquitin-protein ligase complex which contains CUL5, either RBX1 or RNF7/RBX2, Elongin BC complex (ELOB and ELOC) and ASB2. Interacts with SKP2. Through its interaction with SKP2, likely to bridge the formation of dimeric E3-ubiquitin-protein ligase complexes composed of an ECS complex and an SCF(SKP2) complex. Interacts with JAK2; the interaction targets JAK2 for Notch-mediated proteasomal degradation. Interacts with TCF3/E2A; the interaction is mediated by SKP2 and targets TCF3 for Notch-mediated proteasomal degradation. As to quaternary structure, interacts with DES. In terms of processing, monoubiquitinated. Not monoubiquitinated. Post-translationally, phosphorylation at Ser-371 is required for association with FLNA and subsequent FLNA degradation. In terms of tissue distribution, highest expression in muscle, heart and spleen. Highly expressed in cells of the first and second heart fields in the developing embryonic heart. At 9.5 dpc, robust expression predominantly in the left and right ventricles (RV) and to a lower extent in inflow and outflow tracts. At 10.5 and 11.5 dpc, expression is restricted to the myocardium with no expression observed in the endocardium. As to expression, not expressed in immature dendritic cells. Highly expressed in adult skeletal muscle with very low levels in adult bone marrow. Expressed in immature dendritic cells and in primary dendritic cells derived from the spleen. Highly expressed in adult bone marrow with negligible levels in adult skeletal muscle. Expressed at higher levels in T helper type 2 (Th2) cells than in regulatory T (Treg) cells, type 1 helper T (Th1) cells and T helper 17 (Th17) cells.

The protein localises to the cytoplasm. It localises to the cytoskeleton. Its subcellular location is the stress fiber. The protein resides in the myofibril. It is found in the sarcomere. The protein localises to the z line. The protein operates within protein modification; protein ubiquitination. Its function is as follows. Substrate-recognition component of a SCF-like ECS (Elongin-Cullin-SOCS-box protein) E3 ubiquitin-protein ligase complex which mediates the ubiquitination and subsequent proteasomal degradation of target proteins. Mediates Notch-induced ubiquitination and degradation of substrates including TCF3/E2A and JAK2. Required during embryonic heart development for complete heart looping. Required for cardiomyocyte differentiation. Specifically promotes the ubiquitination of SMAD9 and targets it for proteasomal degradation, leading to avoid excessive accumulation of SMAD9. Plays a role in the regulation of NK-cell migration by modulating protein levels of filamin A/FLNA via regulation of its ubiquitination and proteasome degradation. Involved in myogenic differentiation and targets filamin FLNB for proteasomal degradation but not filamin FLNA. Also targets DES for proteasomal degradation. Acts as a negative regulator of skeletal muscle mass. Functionally, targets filamins FLNA and FLNB for proteasomal degradation. This leads to enhanced adhesion of hematopoietic cells to fibronectin. Required for FLNA degradation in immature cardiomyocytes which is necessary for actin cytoskeleton remodeling, leading to proper organization of myofibrils and function of mature cardiomyocytes. Required for degradation of FLNA and FLNB in immature dendritic cells (DC) which enhances immature DC migration by promoting DC podosome formation and DC-mediated degradation of the extracellular matrix. Does not promote proteasomal degradation of tyrosine-protein kinases JAK1 or JAK2 in hematopoietic cells. This is Ankyrin repeat and SOCS box protein 2 from Mus musculus (Mouse).